Reading from the N-terminus, the 195-residue chain is dITP/XTP pyrophosphatase (195 aa).

Substrate is bound at residue 8-13 (SNNQGK). Residues Glu-39 and Asp-68 each contribute to the Mg(2+) site. Asp-68 (proton acceptor) is an active-site residue. Residues Ser-69, 149-152 (FGYD), Lys-172, and 177-178 (HR) contribute to the substrate site.

Belongs to the HAM1 NTPase family. As to quaternary structure, homodimer. The cofactor is Mg(2+).

It carries out the reaction XTP + H2O = XMP + diphosphate + H(+). It catalyses the reaction dITP + H2O = dIMP + diphosphate + H(+). The enzyme catalyses ITP + H2O = IMP + diphosphate + H(+). Its function is as follows. Pyrophosphatase that catalyzes the hydrolysis of nucleoside triphosphates to their monophosphate derivatives, with a high preference for the non-canonical purine nucleotides XTP (xanthosine triphosphate), dITP (deoxyinosine triphosphate) and ITP. Seems to function as a house-cleaning enzyme that removes non-canonical purine nucleotides from the nucleotide pool, thus preventing their incorporation into DNA/RNA and avoiding chromosomal lesions. This chain is dITP/XTP pyrophosphatase, found in Staphylococcus aureus (strain MRSA252).